The sequence spans 380 residues: Palmitoyltransferase ZDHHC20 (380 aa).

Topologically, residues methionine 1–valine 14 are cytoplasmic. The helical transmembrane segment at glycine 15–valine 35 threads the bilayer. Residues glutamate 36–valine 53 lie on the Lumenal side of the membrane. Residues tyrosine 54–phenylalanine 74 traverse the membrane as a helical segment. The Cytoplasmic portion of the chain corresponds to threonine 75–lysine 169. One can recognise a DHHC domain in the interval arginine 126–leucine 176. Positions 128 and 131 each coordinate Zn(2+). Residues lysine 135 and histidine 140 to serine 143 each bind substrate. Zn(2+)-binding residues include histidine 141, cysteine 142, cysteine 145, cysteine 148, and histidine 155. The S-palmitoyl cysteine intermediate role is filled by cysteine 156. Position 162 (cysteine 162) interacts with Zn(2+). A helical membrane pass occupies residues phenylalanine 170 to leucine 190. The Lumenal segment spans residues glutamate 191 to lysine 222. A helical membrane pass occupies residues phenylalanine 223–histidine 246. Residues cysteine 247–asparagine 380 lie on the Cytoplasmic side of the membrane. A phosphoserine mark is found at serine 320, serine 345, and serine 354.

The protein belongs to the DHHC palmitoyltransferase family. Autopalmitoylated (in vitro). In terms of tissue distribution, highest levels in lung.

It localises to the golgi apparatus membrane. The protein localises to the cell membrane. Its subcellular location is the cytoplasm. It is found in the perinuclear region. The protein resides in the endoplasmic reticulum membrane. It localises to the endoplasmic reticulum-Golgi intermediate compartment membrane. It carries out the reaction L-cysteinyl-[protein] + hexadecanoyl-CoA = S-hexadecanoyl-L-cysteinyl-[protein] + CoA. The enzyme catalyses L-cysteinyl-[protein] + tetradecanoyl-CoA = S-tetradecanoyl-L-cysteinyl-[protein] + CoA. It catalyses the reaction L-cysteinyl-[protein] + octadecanoyl-CoA = S-octadecanoyl-L-cysteinyl-[protein] + CoA. In terms of biological role, palmitoyltransferase that could catalyze the addition of palmitate onto various protein substrates. Catalyzes palmitoylation of Cys residues in the cytoplasmic C-terminus of EGFR, and modulates the duration of EGFR signaling by modulating palmitoylation-dependent EGFR internalization and degradation. Has a preference for acyl-CoA with C16 fatty acid chains. Can also utilize acyl-CoA with C14 and C18 fatty acid chains. May palmitoylate CALHM1 subunit of gustatory voltage-gated ion channels and modulate channel gating and kinetics. The polypeptide is Palmitoyltransferase ZDHHC20 (Mus musculus (Mouse)).